Reading from the N-terminus, the 40-residue chain is MKVHRMPKGVVLVGKAWEIRAKLKEYGRTFQYVKDWISKP.

As to quaternary structure, interacts with FtsZ. Binds to the C-terminal polymerization interface of FtsZ. Binds to FtsZ filaments.

Highly effective in inhibiting polymerization at low and intermediate concentrations of GTP and only partially effective at high GTP concentrations. In terms of biological role, blocks Z-ring formation in the mother cell during sporulation by inhibiting the polymerization of FtsZ. Binds to the minus end of FtsZ and functions as a filament-capping protein. At high concentrations, is capable of both capping and sequestration of FtsZ. Decreases the GTPase activity of FtsZ. This is Cell division inhibitor MciZ from Bacillus subtilis (strain 168).